The following is a 618-amino-acid chain: Phostensin (618 aa).

The segment covering 15–33 (RRQEEAAVRGREKAERERL) has biased composition (basic and acidic residues). Positions 15–505 (RRQEEAAVRG…PATADAAVPG (491 aa)) are disordered. Position 54 is a phosphoserine (serine 54). Residues 96–109 (QQQQQQQQQQQQQQ) show a composition bias toward low complexity. Composition is skewed to basic and acidic residues over residues 110–160 (RSEE…ERRL) and 173–197 (LESR…EVRK). Residues serine 131, serine 139, serine 181, and serine 201 each carry the phosphoserine modification. Phosphothreonine is present on threonine 205. Serine 231 bears the Phosphoserine mark. Composition is skewed to basic and acidic residues over residues 234–245 (DSDHEKLGLTDA) and 271–289 (SGEE…EERT). The segment covering 308–319 (EAAGSSSGGVEA) has biased composition (low complexity). A compositionally biased stretch (basic and acidic residues) spans 348–358 (KVRDRTPRDTE). A compositionally biased stretch (pro residues) spans 429–451 (RPPPAAPLSPPPPAPPAPQPPGD). Serine 437 is modified (phosphoserine). Lysine 462 bears the N6-acetyllysine mark. A compositionally biased stretch (low complexity) spans 485-505 (APPAAAATPATPATADAAVPG). Phosphoserine is present on serine 535. Residues 556–594 (YQYPSESSVLEELGPEPEAPSAPSPPAAQPDDEEDEEEL) are disordered. Residues 572 to 583 (PEAPSAPSPPAA) are compositionally biased toward pro residues. Residues 585 to 594 (PDDEEDEEEL) show a composition bias toward acidic residues.

As to quaternary structure, interacts with Protein phosphatase 1 (PP1).

Its subcellular location is the cytoplasm. It localises to the cytoskeleton. Its function is as follows. May target protein phosphatase 1 to F-actin cytoskeleton. This is Phostensin (PPP1R18) from Sus scrofa (Pig).